Here is a 173-residue protein sequence, read N- to C-terminus: RxLR effector protein PITG_10232 (173 aa).

The signal sequence occupies residues 1-24 (MRLGYLIVGCAVALLATTDGVVDA). The segment at 25–64 (SSKHKQLSTDVPRPADDISSERFLRSQDTPEDDGNPAHED) is disordered. Basic and acidic residues predominate over residues 37–49 (RPADDISSERFLR). The RxLR-dEER signature appears at 46–65 (RFLRSQDTPEDDGNPAHEDR).

Belongs to the RxLR effector family.

The protein localises to the secreted. It is found in the host nucleus. Its subcellular location is the host cytoplasm. Its function is as follows. Effector that leads to host programmed cell death. The sequence is that of RxLR effector protein PITG_10232 from Phytophthora infestans (strain T30-4) (Potato late blight agent).